The primary structure comprises 363 residues: D-proline dehydrogenase (363 aa).

V3 to Y17 provides a ligand contact to FAD.

This sequence belongs to the DadA oxidoreductase family. In terms of assembly, homotetramer. The cofactor is FAD.

The protein localises to the cell membrane. The catalysed reaction is D-proline + A = 1-pyrroline-2-carboxylate + AH2. Catalyzes the dehydrogenation of D-proline. Can also use other D-amino acids, but with lower efficiency. The polypeptide is D-proline dehydrogenase (dpdh) (Pyrobaculum islandicum (strain DSM 4184 / JCM 9189 / GEO3)).